The chain runs to 560 residues: Serine/threonine-protein kinase TOS3 (560 aa).

One can recognise a Protein kinase domain in the interval 50-344; sequence FEILATLGNG…LADIKVHPFM (295 aa). ATP contacts are provided by residues 56–64 and Lys-79; that span reads LGNGQYGKV. Asp-189 functions as the Proton acceptor in the catalytic mechanism.

Belongs to the protein kinase superfamily. Ser/Thr protein kinase family. In terms of processing, autophosphorylated.

It carries out the reaction L-seryl-[protein] + ATP = O-phospho-L-seryl-[protein] + ADP + H(+). It catalyses the reaction L-threonyl-[protein] + ATP = O-phospho-L-threonyl-[protein] + ADP + H(+). Functionally, one of the three SNF1 protein kinases (with SAK1 and ELM1) which are required for growth on nonfermentable carbon sources and nonpreferred sugars and for response to environmental stress. Activates SNF1 by phosphorylation of its activation-loop 'Thr-210'. Required for the regulation by SNF1 of the transcription of a large set of genes, the modification the activity of metabolic enzymes, and the control of various nutrient-responsive cellular developmental processes. Also phosphorylates GAL83, MIG1 and SIP2. This Saccharomyces cerevisiae (strain YJM789) (Baker's yeast) protein is Serine/threonine-protein kinase TOS3 (TOS3).